A 187-amino-acid chain; its full sequence is MKILFCDVLLLSLLSSVFSSCPRDCLTCQEKLHPAPDSFNLKTCILQCEEKVFPRPLWTVCTKVMASGSGQLSPADPELVSAALYQPKASEMQHLKRMPRVRSLVQVRDAEPGADAEPGADAEPGADDAEEVEQKQLQKRFGGFTGARKSARKLANQKRFSEFMRQYLVLSMQSSQRRRTLHQNGNV.

The signal sequence occupies residues 1-19 (MKILFCDVLLLSLLSSVFS). The propeptide occupies 20–95 (SCPRDCLTCQ…QPKASEMQHL (76 aa)). 3 repeat units span residues 109–114 (DAEPGA), 115–120 (DAEPGA), and 121–126 (DAEPGA). The segment at 109-126 (DAEPGADAEPGADAEPGA) is 3 X 6 AA tandem repeats of D-A-E-P-G-A. The interval 109 to 133 (DAEPGADAEPGADAEPGADDAEEVE) is disordered. Positions 112–131 (PGADAEPGADAEPGADDAEE) are enriched in acidic residues. Positions 180-187 (TLHQNGNV) are excised as a propeptide.

Belongs to the opioid neuropeptide precursor family. Post-translationally, specific enzymatic cleavages at paired basic residues probably yield other active peptides besides nociceptin. The N-terminal domain contains 6 conserved cysteines thought to be involved in disulfide bonding and/or processing. In terms of tissue distribution, brain and spinal cord. Low levels in kidney and spleen.

It is found in the secreted. Functionally, ligand of the opioid receptor-like receptor OPRL1. It may act as a transmitter in the brain by modulating nociceptive and locomotor behavior. May be involved in neuronal differentiation and development. When administered intracerebroventricularly, nociceptin induces hyperalgesia and decreases locomotor activity. In terms of biological role, blocks nociceptin action in pain transmission by inhibiting nociceptin-induced hyperalgesia and allodynia. Its function is as follows. Has potent analgesic activity. In Mus musculus (Mouse), this protein is Prepronociceptin (Pnoc).